An 89-amino-acid polypeptide reads, in one-letter code: Putative regulatory protein Nther_1328 (89 aa).

Belongs to the RemA family.

The polypeptide is Putative regulatory protein Nther_1328 (Natranaerobius thermophilus (strain ATCC BAA-1301 / DSM 18059 / JW/NM-WN-LF)).